The primary structure comprises 43 residues: Protein PsbN (43 aa).

Residues 7 to 27 traverse the membrane as a helical segment; it reads LSISIGVMVVAITGFSIYTAF.

The protein belongs to the PsbN family.

The protein localises to the cellular thylakoid membrane. Its function is as follows. May play a role in photosystem I and II biogenesis. The polypeptide is Protein PsbN (Trichodesmium erythraeum (strain IMS101)).